The primary structure comprises 138 residues: Basic phospholipase A2 homolog ammodytin L (138 aa).

Positions 1–16 (MRILWIVAVCLIGVEG) are cleaved as a signal peptide. Cystine bridges form between C42/C131, C44/C60, C59/C111, C65/C138, C66/C104, C73/C97, and C91/C102. The segment at 121–133 (KKYKVYLRFKCKG) is important for membrane-damaging activities in eukaryotes and bacteria; heparin-binding.

The protein belongs to the phospholipase A2 family. Group II subfamily. S49 sub-subfamily. As to expression, expressed by the venom gland.

It is found in the secreted. Functionally, snake venom phospholipase A2 homolog that lacks enzymatic activity. Is very active in inducing myonecrosis in vivo and shows a potent calcium-independent membrane-damaging activity in vitro, most probably by binding and incorporating in the membrane. Also acts as a presynaptic neurotoxin. A model of myotoxic mechanism has been proposed: an apo Lys49-PLA2 is activated by the entrance of a hydrophobic molecule (e.g. fatty acid) at the hydrophobic channel of the protein leading to a reorientation of a monomer. This reorientation causes a transition between 'inactive' to 'active' states, causing alignment of C-terminal and membrane-docking sites (MDoS) side-by-side and putting the membrane-disruption sites (MDiS) in the same plane, exposed to solvent and in a symmetric position for both monomers. The MDoS region stabilizes the toxin on membrane by the interaction of charged residues with phospholipid head groups. Subsequently, the MDiS region destabilizes the membrane with penetration of hydrophobic residues. This insertion causes a disorganization of the membrane, allowing an uncontrolled influx of ions (i.e. calcium and sodium), and eventually triggering irreversible intracellular alterations and cell death. In Vipera ammodytes ammodytes (Western sand viper), this protein is Basic phospholipase A2 homolog ammodytin L.